Here is a 172-residue protein sequence, read N- to C-terminus: S-ribosylhomocysteine lyase (172 aa).

Residues H54, H58, and C128 each coordinate Fe cation.

It belongs to the LuxS family. Homodimer. Requires Fe cation as cofactor.

The enzyme catalyses S-(5-deoxy-D-ribos-5-yl)-L-homocysteine = (S)-4,5-dihydroxypentane-2,3-dione + L-homocysteine. Functionally, involved in the synthesis of autoinducer 2 (AI-2) which is secreted by bacteria and is used to communicate both the cell density and the metabolic potential of the environment. The regulation of gene expression in response to changes in cell density is called quorum sensing. Catalyzes the transformation of S-ribosylhomocysteine (RHC) to homocysteine (HC) and 4,5-dihydroxy-2,3-pentadione (DPD). The polypeptide is S-ribosylhomocysteine lyase (Aliivibrio salmonicida (strain LFI1238) (Vibrio salmonicida (strain LFI1238))).